We begin with the raw amino-acid sequence, 535 residues long: Heat shock factor protein 2 (535 aa).

Residues Lys2, Lys82, Lys135, Lys139, Lys151, Lys210, Lys218, and Lys237 each participate in a glycyl lysine isopeptide (Lys-Gly) (interchain with G-Cter in SUMO2) cross-link. The DNA-binding element occupies 7-112 (VPAFLSKLWT…LLENIKRKVS (106 aa)). Positions 119–192 (NKIRQEDLTK…VTLVQNNQLV (74 aa)) are hydrophobic repeat HR-A/B. The interval 298–325 (QSGEQSEPAREPLRVGSAGSSSPLMSSA) is disordered. A compositionally biased stretch (low complexity) spans 313–325 (GSAGSSSPLMSSA). The segment at 359–384 (LLDYLDSIDCSLEDFQAMLSGRQFSI) is hydrophobic repeat HR-C. The segment at 418 to 437 (TKSSVVQHVSEEGRKSKSKP) is disordered. The segment covering 426-437 (VSEEGRKSKSKP) has biased composition (basic and acidic residues).

This sequence belongs to the HSF family. In terms of assembly, DNA-binding homotrimer in stressed or heat shocked cells, otherwise found as a homodimer. In terms of tissue distribution, isoform alpha is expressed predominantly in testis while isoform beta is expressed predominantly in heart and brain.

It is found in the cytoplasm. Its subcellular location is the nucleus. Its function is as follows. DNA-binding protein that specifically binds heat shock promoter elements (HSE) and activates transcription. In higher eukaryotes, HSF is unable to bind to the HSE unless the cells are heat shocked. HSF2 is expressed in a form that binds DNA constitutively but loses DNA binding by incubation at greater than 41 degrees C. The protein is Heat shock factor protein 2 (Hsf2) of Mus musculus (Mouse).